Here is a 118-residue protein sequence, read N- to C-terminus: Small ribosomal subunit protein uS13 (118 aa).

Residues 95–118 are disordered; sequence LPVRGQRTRTNARTRKGPKKLINK.

The protein belongs to the universal ribosomal protein uS13 family. As to quaternary structure, part of the 30S ribosomal subunit. Forms a loose heterodimer with protein S19. Forms two bridges to the 50S subunit in the 70S ribosome.

Its function is as follows. Located at the top of the head of the 30S subunit, it contacts several helices of the 16S rRNA. In the 70S ribosome it contacts the 23S rRNA (bridge B1a) and protein L5 of the 50S subunit (bridge B1b), connecting the 2 subunits; these bridges are implicated in subunit movement. Contacts the tRNAs in the A and P-sites. The polypeptide is Small ribosomal subunit protein uS13 (Blochmanniella floridana).